Here is a 544-residue protein sequence, read N- to C-terminus: Methionine--tRNA ligase (544 aa).

The 'HIGH' region motif lies at 10 to 20 (PYANGSLHLGH). Cysteine 141, cysteine 144, cysteine 153, and cysteine 156 together coordinate Zn(2+). Positions 329–333 (KLSTS) match the 'KMSKS' region motif. Threonine 332 contributes to the ATP binding site.

This sequence belongs to the class-I aminoacyl-tRNA synthetase family. MetG type 1 subfamily. Monomer. Zn(2+) is required as a cofactor.

It is found in the cytoplasm. It carries out the reaction tRNA(Met) + L-methionine + ATP = L-methionyl-tRNA(Met) + AMP + diphosphate. Is required not only for elongation of protein synthesis but also for the initiation of all mRNA translation through initiator tRNA(fMet) aminoacylation. This is Methionine--tRNA ligase from Bacillus mycoides (strain KBAB4) (Bacillus weihenstephanensis).